The sequence spans 450 residues: Glucose-6-phosphate isomerase (450 aa).

Glu290 acts as the Proton donor in catalysis. Catalysis depends on residues His311 and Lys425.

Belongs to the GPI family.

It is found in the cytoplasm. The enzyme catalyses alpha-D-glucose 6-phosphate = beta-D-fructose 6-phosphate. It functions in the pathway carbohydrate biosynthesis; gluconeogenesis. The protein operates within carbohydrate degradation; glycolysis; D-glyceraldehyde 3-phosphate and glycerone phosphate from D-glucose: step 2/4. Its function is as follows. Catalyzes the reversible isomerization of glucose-6-phosphate to fructose-6-phosphate. The chain is Glucose-6-phosphate isomerase from Limosilactobacillus fermentum (Lactobacillus fermentum).